The primary structure comprises 255 residues: MRILLTNDDGIHAEGLAVLERIARKLSDDVWVVAPETDQSGLAHSLTLSEPLRLRQIDARHFALRGTPTDCVIMGVRHVLPGAPNLVLSGVNSGANMADDVTYSGTVAGAMEGTLLGVRAIALSQEYEYAGDRRIVPWETAEAHAPELIGRLMEAGWPEGVLLNLNFPNCAPEEVKGVRVTAQGKLSHDARLDERRDGRGFPYFWLHFGRGKAPVADDSDIAAIRSGCISVTPLHLDLTAHKVRAELGAALGVEA.

A divalent metal cation contacts are provided by aspartate 8, aspartate 9, serine 40, and asparagine 92.

Belongs to the SurE nucleotidase family. Requires a divalent metal cation as cofactor.

The protein localises to the cytoplasm. It carries out the reaction a ribonucleoside 5'-phosphate + H2O = a ribonucleoside + phosphate. In terms of biological role, nucleotidase that shows phosphatase activity on nucleoside 5'-monophosphates. In Brucella suis (strain ATCC 23445 / NCTC 10510), this protein is 5'-nucleotidase SurE.